The following is a 349-amino-acid chain: Phenylalanine--tRNA ligase alpha subunit (349 aa).

Glutamate 258 provides a ligand contact to Mg(2+).

This sequence belongs to the class-II aminoacyl-tRNA synthetase family. Phe-tRNA synthetase alpha subunit type 1 subfamily. In terms of assembly, tetramer of two alpha and two beta subunits. Mg(2+) serves as cofactor.

The protein resides in the cytoplasm. The enzyme catalyses tRNA(Phe) + L-phenylalanine + ATP = L-phenylalanyl-tRNA(Phe) + AMP + diphosphate + H(+). The polypeptide is Phenylalanine--tRNA ligase alpha subunit (Rickettsia canadensis (strain McKiel)).